We begin with the raw amino-acid sequence, 604 residues long: Glutamyl-tRNA(Gln) amidotransferase subunit B, mitochondrial (604 aa).

Residues 1 to 48 (MIRQCLSRRGAYSRYRLAARGVELAEPFHHQSSRPQGRRNWSSSPRCS) constitute a mitochondrion transit peptide. The segment at 28-57 (FHHQSSRPQGRRNWSSSPRCSLDIRTDTPR) is disordered. Over residues 33–46 (SRPQGRRNWSSSPR) the composition is skewed to polar residues.

This sequence belongs to the GatB/GatE family. GatB subfamily. Subunit of the heterotrimeric GatCAB amidotransferase (AdT) complex, composed of A, B and C subunits.

It is found in the mitochondrion. It carries out the reaction L-glutamyl-tRNA(Gln) + L-glutamine + ATP + H2O = L-glutaminyl-tRNA(Gln) + L-glutamate + ADP + phosphate + H(+). Allows the formation of correctly charged Gln-tRNA(Gln) through the transamidation of misacylated Glu-tRNA(Gln) in the mitochondria. The reaction takes place in the presence of glutamine and ATP through an activated gamma-phospho-Glu-tRNA(Gln). In Blastomyces gilchristii (strain SLH14081) (Blastomyces dermatitidis), this protein is Glutamyl-tRNA(Gln) amidotransferase subunit B, mitochondrial.